Consider the following 199-residue polypeptide: MLTETEGRAAVKLARKTIEIFLSKGKSPRPDASGVELSPVFEEYRGVFVTLTEGGLLRGCIGHPYPDSTLKEAILDSAISAATRDPRFPTVEQDEMKNILVEVTILTQPEKINASPKELPDKVEIGKHGLIVKQGYCQGLLLPQVAPENDMDSIDFLSHTCMKAGLSPDAWVKGAEVYCFEGQIFKEKEPDGEVIEEKF.

Residues 5–196 (TEGRAAVKLA…EKEPDGEVIE (192 aa)) enclose the AMMECR1 domain.

The sequence is that of Protein MM_0484 from Methanosarcina mazei (strain ATCC BAA-159 / DSM 3647 / Goe1 / Go1 / JCM 11833 / OCM 88) (Methanosarcina frisia).